Reading from the N-terminus, the 30-residue chain is Cyclotide hyen-H (30 aa).

Residues 1–30 constitute a cross-link (cyclopeptide (Lys-Asp)); the sequence is KIPCGESCVYIPCISSVLGCSCSNKVCYKD. Intrachain disulfides connect Cys-4/Cys-20, Cys-8/Cys-22, and Cys-13/Cys-27.

Post-translationally, this is a cyclic peptide. Detected in stems (at protein level).

Its function is as follows. Probably participates in a plant defense mechanism. The sequence is that of Cyclotide hyen-H from Pigea enneasperma (Spade flower).